Consider the following 474-residue polypeptide: Chromosomal replication initiator protein DnaA (474 aa).

Residues 1–73 (MTNIEQERWS…LSCWQAEMPE (73 aa)) are domain I, interacts with DnaA modulators. Residues 73–130 (EVHRIDLTVRTAMRCAAPAKEQAAPIEPRREDNRAAAHDLRVSATAPVSANHEALGGS) are domain II. The domain III, AAA+ region stretch occupies residues 131–353 (PLDPRLTFSS…GAINRLLAHS (223 aa)). Residues glycine 178, glycine 180, lysine 181, and threonine 182 each contribute to the ATP site. The segment at 354-474 (KLNAQPVTLE…VESLKRQLQE (121 aa)) is domain IV, binds dsDNA.

This sequence belongs to the DnaA family. Oligomerizes as a right-handed, spiral filament on DNA at oriC.

It is found in the cytoplasm. Plays an essential role in the initiation and regulation of chromosomal replication. ATP-DnaA binds to the origin of replication (oriC) to initiate formation of the DNA replication initiation complex once per cell cycle. Binds the DnaA box (a 9 base pair repeat at the origin) and separates the double-stranded (ds)DNA. Forms a right-handed helical filament on oriC DNA; dsDNA binds to the exterior of the filament while single-stranded (ss)DNA is stabiized in the filament's interior. The ATP-DnaA-oriC complex binds and stabilizes one strand of the AT-rich DNA unwinding element (DUE), permitting loading of DNA polymerase. After initiation quickly degrades to an ADP-DnaA complex that is not apt for DNA replication. Binds acidic phospholipids. In Rhodopseudomonas palustris (strain BisA53), this protein is Chromosomal replication initiator protein DnaA.